The primary structure comprises 404 residues: 5-aminolevulinate synthase (404 aa).

The substrate site is built by arginine 21 and serine 136. Pyridoxal 5'-phosphate is bound by residues serine 188, histidine 216, and threonine 244. Lysine 247 is an active-site residue. The residue at position 247 (lysine 247) is an N6-(pyridoxal phosphate)lysine. Positions 276 and 277 each coordinate pyridoxal 5'-phosphate. A substrate-binding site is contributed by threonine 362.

The protein belongs to the class-II pyridoxal-phosphate-dependent aminotransferase family. Homodimer. The cofactor is pyridoxal 5'-phosphate.

The enzyme catalyses succinyl-CoA + glycine + H(+) = 5-aminolevulinate + CO2 + CoA. The protein operates within porphyrin-containing compound metabolism; protoporphyrin-IX biosynthesis; 5-aminolevulinate from glycine: step 1/1. This chain is 5-aminolevulinate synthase (hemA), found in Rhizobium meliloti (strain 1021) (Ensifer meliloti).